Reading from the N-terminus, the 429-residue chain is Citrate synthase (429 aa).

Active-site residues include His-306 and Asp-364.

It belongs to the citrate synthase family.

The catalysed reaction is oxaloacetate + acetyl-CoA + H2O = citrate + CoA + H(+). It participates in carbohydrate metabolism; tricarboxylic acid cycle; isocitrate from oxaloacetate: step 1/2. The polypeptide is Citrate synthase (gltA) (Rhizobium meliloti (strain 1021) (Ensifer meliloti)).